We begin with the raw amino-acid sequence, 248 residues long: Tyrosine recombinase XerD-like (248 aa).

One can recognise a Core-binding (CB) domain in the interval 1–72 (MIAFIEPFLA…TVNQFLYYLY (72 aa)). The region spanning 92–248 (SLKPQLTRLD…PITLEKYYKM (157 aa)) is the Tyr recombinase domain. Residue Arg-213 is part of the active site. The O-(3'-phospho-DNA)-tyrosine intermediate role is filled by Tyr-245.

Belongs to the 'phage' integrase family. XerD-like subfamily.

It localises to the cytoplasm. Functionally, putative tyrosine recombinase. Not involved in the cutting and rejoining of the recombining DNA molecules on dif(SL) site. In Streptococcus equi subsp. zooepidemicus (strain MGCS10565), this protein is Tyrosine recombinase XerD-like.